We begin with the raw amino-acid sequence, 308 residues long: MTSTDQGSWARSEGDSWDIVSSVGYTALGVSAQRAVESERPDALIDDPFAKHFVLAAGEPHLIETITKRDAPQASPFEYLRGMGMRSRFFDEFFLEAAASGITQAVILAAGLDARAHRLAWPAGVTVYELDQPQVLAFKDGVYAQQGAEPTCDRRTVAVDLRDDWPAALKEAGFDAGRPTAWSAEGLLPYLPAAAQELLFERMVELSAPGSRAAIEGPTGTLGMSQFAKVEQKYRSEKDTFGKIDITELFYDEEKTPPVEWFSVRGWSTQGLDMFDLAERYGVRHPEVPEDIRELAGAMHYLTCTLPA.

S-adenosyl-L-methionine contacts are provided by residues aspartate 131 and 160-161; that span reads DL.

This sequence belongs to the UPF0677 family.

In terms of biological role, exhibits S-adenosyl-L-methionine-dependent methyltransferase activity. The polypeptide is Putative S-adenosyl-L-methionine-dependent methyltransferase MAB_4585c (Mycobacteroides abscessus (strain ATCC 19977 / DSM 44196 / CCUG 20993 / CIP 104536 / JCM 13569 / NCTC 13031 / TMC 1543 / L948) (Mycobacterium abscessus)).